The primary structure comprises 138 residues: ATP synthase epsilon chain (138 aa).

It belongs to the ATPase epsilon chain family. F-type ATPases have 2 components, CF(1) - the catalytic core - and CF(0) - the membrane proton channel. CF(1) has five subunits: alpha(3), beta(3), gamma(1), delta(1), epsilon(1). CF(0) has three main subunits: a, b and c.

Its subcellular location is the cell membrane. Functionally, produces ATP from ADP in the presence of a proton gradient across the membrane. This is ATP synthase epsilon chain (atpC) from Streptococcus mutans serotype c (strain ATCC 700610 / UA159).